Consider the following 288-residue polypeptide: Proteasome assembly chaperone 1 (288 aa).

The tract at residues 1 to 33 is disordered; sequence MATFFGEVQSVFSRAVDEEEEDEDDDEEEEEDR. The segment covering 17–33 has biased composition (acidic residues); that stretch reads DEEEEDEDDDEEEEEDR.

The protein belongs to the PSMG1 family. Forms a heterodimer with psmg2. Degraded by the proteasome upon completion of 20S proteasome maturation.

The protein localises to the cytoplasm. Its subcellular location is the endoplasmic reticulum. Chaperone protein which promotes assembly of the 20S proteasome as part of a heterodimer with psmg2. This chain is Proteasome assembly chaperone 1, found in Xenopus laevis (African clawed frog).